The chain runs to 161 residues: Ferric uptake regulation protein 1 (161 aa).

Zn(2+) contacts are provided by C94 and C97.

It belongs to the Fur family.

It is found in the cytoplasm. Functionally, acts as a global negative controlling element, employing Fe(2+) as a cofactor to bind the operator of the repressed genes. This is Ferric uptake regulation protein 1 (fur1) from Mycolicibacterium fortuitum (Mycobacterium fortuitum).